The sequence spans 381 residues: Neutral protease 2 homolog mep20 (381 aa).

Positions Met1–Ala19 are cleaved as a signal peptide. Positions Leu20–Arg193 are excised as a propeptide. Cystine bridges form between Cys199/Cys271 and Cys278/Cys296. His321 serves as a coordination point for Zn(2+). Glu322 is a catalytic residue. The Zn(2+) site is built by His325 and Asp336.

The protein belongs to the peptidase M35 family. Zn(2+) serves as cofactor.

The catalysed reaction is Preferential cleavage of bonds with hydrophobic residues in P1'. Also 3-Asn-|-Gln-4 and 8-Gly-|-Ser-9 bonds in insulin B chain.. Functionally, secreted metalloproteinase that allows assimilation of proteinaceous substrates. Shows high activities on basic nuclear substrates such as histone and protamine. This is Neutral protease 2 homolog mep20 (mep20) from Aspergillus flavus.